A 202-amino-acid chain; its full sequence is B-cell CLL/lymphoma 7 protein family member B (202 aa).

A disordered region spans residues 53-202 (DSKEKEKSKS…PAVPQTASES (150 aa)). The span at 90 to 99 (ENSNQSSVSD) shows a compositional bias: polar residues. Residues 107–123 (SSTNSSPSPQQSESLSP) show a composition bias toward low complexity. Phosphoserine occurs at positions 114, 118, 120, 122, 127, 148, and 152.

Belongs to the BCL7 family.

Functionally, positive regulator of apoptosis. Plays a role in the Wnt signaling pathway, negatively regulating the expression of Wnt signaling components CTNNB1 and HMGA1. Involved in cell cycle progression, maintenance of the nuclear structure and stem cell differentiation. May play a role in lung tumor development or progression. The protein is B-cell CLL/lymphoma 7 protein family member B (BCL7B) of Bos taurus (Bovine).